Reading from the N-terminus, the 1404-residue chain is MAWKTLPIYLLLLLSVFVIQQVSSQDLSSCAGRCGEGYSRDATCNCDYNCQHYMECCPDFKRVCTAELSCKGRCFESFERGRECDCDAQCKKYDKCCPDYESFCAEVHNPTSPPSSKKAPPPSGASQTIKSTTKRSPKPPNKKKTKKVIESEEITEEHSVSENQESSSSSSSSSSSSTIRKIKSSKNSAANRELQKKLKVKDNKKNRTKKKPTPKPPVVDEAGSGLDNGDFKVTTPDTSTTQHNKVSTSPKITTAKPINPRPSLPPNSDTSKETSLTVNKETTVETKETTTTNKQTSTDGKEKTTSAKETQSIEKTSAKDLAPTSKVLAKPTPKAETTTKGPALTTPKEPTPTTPKEPASTTPKEPTPTTIKSAPTTPKEPAPTTTKSAPTTPKEPAPTTTKEPAPTTPKEPAPTTTKEPAPTTTKSAPTTPKEPAPTTPKKPAPTTPKEPAPTTPKEPTPTTPKEPAPTTKEPAPTTPKEPAPTAPKKPAPTTPKEPAPTTPKEPAPTTTKEPSPTTPKEPAPTTTKSAPTTTKEPAPTTTKSAPTTPKEPSPTTTKEPAPTTPKEPAPTTPKKPAPTTPKEPAPTTPKEPAPTTTKKPAPTTPKEPAPTTPKETAPTTPKKLTPTTPEKLAPTTPEKPAPTTPEELAPTTPEEPTPTTPEEPAPTTPKAAAPNTPKEPAPTTPKEPAPTTPKEPAPTTPKETAPTTPKGTAPTTLKEPAPTTPKKPAPKELAPTTTKEPTSTTSDKPAPTTPKGTAPTTPKEPAPTTPKEPAPTTPKGTAPTTLKEPAPTTPKKPAPKELAPTTTKGPTSTTSDKPAPTTPKETAPTTPKEPAPTTPKKPAPTTPETPPPTTSEVSTPTTTKEPTTIHKSPDESTPELSAEPTPKALENSPKEPGVPTTKTPAATKPEMTTTAKDKTTERDLRTTPETTTAAPKMTKETATTTEKTTESKITATTTQVTSTTTQDTTPFKITTLKTTTLAPKVTTTKKTITTTEIMNKPEETAKPKDRATNSKATTPKPQKPTKAPKKPTSTKKPKTMPRVRKPKTTPTPRKMTSTMPELNPTSRIAEAMLQTTTRPNQTPNSKLVEVNPKSEDAGGAEGETPHMLLRPHVFMPEVTPDMDYLPRVPNQGIIINPMLSDETNICNGKPVDGLTTLRNGTLVAFRGHYFWMLSPFSPPSPARRITEVWGIPSPIDTVFTRCNCEGKTFFFKDSQYWRFTNDIKDAGYPKPIFKGFGGLTGQIVAALSTAKYKNWPESVYFFKRGGSIQQYIYKQEPVQKCPGRRPALNYPVYGETTQVRRRRFERAIGPSQTHTIRIQYSPARLAYQDKGVLHNEVKVSILWRGLPNVVTSAISLPNIRKPDGYDYYAFSKDQYYNIDVPSRTARAITTRSGQTLSKVWYNCP.

An N-terminal signal peptide occupies residues 1–24 (MAWKTLPIYLLLLLSVFVIQQVSS). 2 SMB domains span residues 26 to 69 (DLSS…AELS) and 66 to 108 (AELS…AEVH). Cystine bridges form between Cys-30/Cys-34, Cys-30/Cys-46, Cys-34/Cys-64, Cys-44/Cys-46, Cys-44/Cys-57, Cys-50/Cys-56, Cys-57/Cys-64, Cys-70/Cys-74, Cys-70/Cys-86, Cys-74/Cys-104, Cys-84/Cys-86, Cys-84/Cys-97, Cys-90/Cys-96, and Cys-97/Cys-104. The tract at residues 111–966 (TSPPSSKKAP…TTQVTSTTTQ (856 aa)) is disordered. O-linked (GalNAc...) serine glycosylation is found at Ser-123 and Ser-136. Residues 132–146 (TTKRSPKPPNKKKTK) show a composition bias toward basic residues. The segment covering 166-177 (SSSSSSSSSSSS) has biased composition (low complexity). Residues 193-205 (ELQKKLKVKDNKK) are compositionally biased toward basic and acidic residues. The N-linked (GlcNAc...) asparagine glycan is linked to Asn-206. The span at 235–252 (TPDTSTTQHNKVSTSPKI) shows a compositional bias: polar residues. O-linked (GalNAc...) threonine glycosylation is found at Thr-240 and Thr-253. Residues 266-276 (PNSDTSKETSL) show a composition bias toward polar residues. O-linked (GalNAc...) threonine glycans are attached at residues Thr-277, Thr-291, and Thr-305. Ser-306 is a glycosylation site (O-linked (GalNAc...) serine). A glycan (O-linked (GalNAc...) threonine) is linked at Thr-310. O-linked (GalNAc...) serine glycosylation is present at Ser-317. 3 O-linked (GalNAc...) threonine glycosylation sites follow: Thr-324, Thr-332, and Thr-338. 2 stretches are compositionally biased toward low complexity: residues 329–348 (AKPT…TTPK) and 356–405 (KEPA…KEPA). Copy 1 of the repeat occupies 348–355 (KEPTPTTP). A 59 X 8 AA repeats of K-X-P-X-P-T-T-X region spans residues 348–855 (KEPTPTTPKE…TPETPPPTTS (508 aa)). Residues 356 to 363 (KEPASTTP) form a 2; approximate repeat. Repeat unit 3 spans residues 364–371 (KEPTPTTI). Thr-367 carries an O-linked (GalNAc...) threonine glycan. A 4; approximate repeat occupies 372–378 (KSAPTTP). Residue Ser-373 is glycosylated (O-linked (GalNAc...) serine). 3 O-linked (GalNAc...) threonine glycosylation sites follow: Thr-376, Thr-384, and Thr-385. The stretch at 379-386 (KEPAPTTT) is repeat 5. The 6; approximate repeat unit spans residues 387 to 393 (KSAPTTP). Ser-388 carries O-linked (GalNAc...) serine glycosylation. O-linked (GalNAc...) threonine glycans are attached at residues Thr-391, Thr-399, Thr-400, Thr-407, Thr-408, Thr-415, and Thr-423. Tandem repeats lie at residues 394-401 (KEPAPTTT), 402-409 (KEPAPTTP), 410-417 (KEPAPTTT), and 418-425 (KEPAPTTT). Residues 413-431 (APTTTKEPAPTTTKSAPTT) show a composition bias toward low complexity. An 11; approximate repeat occupies 426 to 432 (KSAPTTP). Ser-427 is a glycosylation site (O-linked (GalNAc...) serine). O-linked (GalNAc...) threonine glycosylation is found at Thr-430, Thr-438, Thr-439, Thr-446, Thr-447, Thr-454, and Thr-455. Pro residues-rich tracts occupy residues 432-467 (PKEP…PKEP) and 476-506 (PTTP…PKEP). 4 repeat units span residues 433-440 (KEPAPTTP), 441-448 (KKPAPTTP), 449-456 (KEPAPTTP), and 457-464 (KEPTPTTP). One copy of the 16; approximate repeat lies at 465–471 (KEPAPTT). The stretch at 472 to 479 (KEPAPTTP) is repeat 17. Residues Thr-477, Thr-478, Thr-485, Thr-493, Thr-494, Thr-501, Thr-502, and Thr-509 are each glycosylated (O-linked (GalNAc...) threonine). The stretch at 480 to 487 (KEPAPTAP) is one 18; approximate repeat. A 19; approximate repeat occupies 488 to 495 (KKPAPTTP). 4 consecutive repeat copies span residues 496 to 503 (KEPAPTTP), 504 to 511 (KEPAPTTT), 512 to 519 (KEPSPTTP), and 520 to 527 (KEPAPTTT). Residues 523 to 561 (APTTTKSAPTTTKEPAPTTTKSAPTTPKEPSPTTTKEPA) are compositionally biased toward low complexity. An O-linked (GalNAc...) threonine glycan is attached at Thr-525. One copy of the 24; approximate repeat lies at 528 to 534 (KSAPTTT). An O-linked (GalNAc...) serine glycan is attached at Ser-529. 3 O-linked (GalNAc...) threonine glycosylation sites follow: Thr-532, Thr-540, and Thr-541. Repeat 25 spans residues 535–542 (KEPAPTTT). One copy of the 26; approximate repeat lies at 543 to 549 (KSAPTTP). 6 consecutive repeat copies span residues 550–557 (KEPSPTTT), 558–565 (KEPAPTTP), 566–573 (KEPAPTTP), 574–581 (KKPAPTTP), 582–589 (KEPAPTTP), and 590–597 (KEPAPTTT). O-linked (GalNAc...) serine glycosylation occurs at Ser-553. 17 O-linked (GalNAc...) threonine glycosylation sites follow: Thr-555, Thr-563, Thr-564, Thr-571, Thr-572, Thr-579, Thr-580, Thr-587, Thr-588, Thr-595, Thr-603, Thr-604, Thr-611, Thr-612, Thr-616, Thr-619, and Thr-627. Residues 562-592 (PTTPKEPAPTTPKKPAPTTPKEPAPTTPKEP) are compositionally biased toward pro residues. The stretch at 598–605 (KKPAPTTP) is one 33; approximate repeat. Over residues 602-611 (PTTPKEPAPT) the composition is skewed to pro residues. Repeat unit 34 spans residues 606–613 (KEPAPTTP). Residues 612-636 (TPKETAPTTPKKLTPTTPEKLAPTT) are compositionally biased toward low complexity. Residues 614–621 (KETAPTTP) form a 35; approximate repeat. A 36; approximate repeat occupies 622 to 629 (KKLTPTTP). The stretch at 638 to 645 (EKPAPTTP) is one 37; approximate repeat. Residues 653-667 (PEEPTPTTPEEPAPT) are compositionally biased toward pro residues. One copy of the 38; approximate repeat lies at 662–669 (EEPAPTTP). O-linked (GalNAc...) threonine glycosylation is found at Thr-676, Thr-683, Thr-684, Thr-691, Thr-692, Thr-699, Thr-700, Thr-704, and Thr-707. The segment covering 677 to 699 (PKEPAPTTPKEPAPTTPKEPAPT) has biased composition (pro residues). A run of 3 repeats spans residues 678 to 685 (KEPAPTTP), 686 to 693 (KEPAPTTP), and 694 to 701 (KEPAPTTP). A compositionally biased stretch (low complexity) spans 700–721 (TPKETAPTTPKGTAPTTLKEPA). One copy of the 42; approximate repeat lies at 702–709 (KETAPTTP). The stretch at 710–717 (KGTAPTTL) is one 43; approximate repeat. Copy 44 of the repeat occupies 718–725 (KEPAPTTP). Residues Thr-723, Thr-724, and Thr-736 are each glycosylated (O-linked (GalNAc...) threonine). Positions 728–761 (PAPKELAPTTTKEPTSTTSDKPAPTTPKGTAPTT) are enriched in low complexity. The stretch at 731 to 738 (KELAPTTT) is one 45; approximate repeat. A 46; approximate repeat occupies 739 to 746 (KEPTSTTS). A 47; approximate repeat occupies 747 to 754 (DKPAPTTP). The 48; approximate repeat unit spans residues 755-762 (KGTAPTTP). Positions 762–776 (PKEPAPTTPKEPAPT) are enriched in pro residues. 2 consecutive repeat copies span residues 763-770 (KEPAPTTP) and 771-778 (KEPAPTTP). Thr-768, Thr-769, Thr-776, and Thr-777 each carry an O-linked (GalNAc...) threonine glycan. Low complexity predominate over residues 777-790 (TPKGTAPTTLKEPA). The 51; approximate repeat unit spans residues 779 to 786 (KGTAPTTL). Copy 52 of the repeat occupies 787 to 794 (KEPAPTTP). O-linked (GalNAc...) threonine glycosylation is found at Thr-792, Thr-793, and Thr-805. Residues 797–830 (PAPKELAPTTTKGPTSTTSDKPAPTTPKETAPTT) are compositionally biased toward low complexity. Residues 800–807 (KELAPTTT) form a 53; approximate repeat. The 54; approximate repeat unit spans residues 808-815 (KGPTSTTS). Ser-812 carries O-linked (GalNAc...) serine glycosylation. Residues 816–823 (DKPAPTTP) form a 55; approximate repeat. One copy of the 56; approximate repeat lies at 824 to 831 (KETAPTTP). O-linked (GalNAc...) threonine glycosylation is found at Thr-829, Thr-837, and Thr-838. Residues 831-853 (PKEPAPTTPKKPAPTTPETPPPT) are compositionally biased toward pro residues. 2 repeat units span residues 832–839 (KEPAPTTP) and 840–847 (KKPAPTTP). Residues 848–855 (ETPPPTTS) form a 59; approximate repeat. Residues 854-866 (TSEVSTPTTTKEP) show a composition bias toward low complexity. O-linked (GalNAc...) serine glycosylation occurs at Ser-892. The segment covering 899-914 (PTTKTPAATKPEMTTT) has biased composition (low complexity). Thr-900 is a glycosylation site (O-linked (GalNAc...) threonine). Residues 915–926 (AKDKTTERDLRT) show a composition bias toward basic and acidic residues. Residues 927–966 (TPETTTAAPKMTKETATTTEKTTESKITATTTQVTSTTTQ) show a composition bias toward low complexity. O-linked (GalNAc...) threonine glycans are attached at residues Thr-930 and Thr-931. An O-linked (GalNAc...) serine glycan is attached at Ser-962. 6 O-linked (GalNAc...) threonine glycosylation sites follow: Thr-963, Thr-968, Thr-975, Thr-978, Thr-979, and Thr-980. The disordered stretch occupies residues 992-1104 (ITTTEIMNKP…EDAGGAEGET (113 aa)). The segment covering 999-1012 (NKPEETAKPKDRAT) has biased composition (basic and acidic residues). Over residues 1026–1047 (KAPKKPTSTKKPKTMPRVRKPK) the composition is skewed to basic residues. Thr-1039 is a glycosylation site (O-linked (GalNAc...) threonine). A compositionally biased stretch (low complexity) spans 1048–1060 (TTPTPRKMTSTMP). Polar residues predominate over residues 1073–1085 (LQTTTRPNQTPNS). Cys-1146 and Cys-1403 are oxidised to a cystine. Hemopexin repeat units follow at residues 1148 to 1191 (GKPV…VWGI) and 1192 to 1239 (PSPI…FGGL). Asn-1159 is a glycosylation site (N-linked (GlcNAc...) asparagine). O-linked (GalNAc...) threonine glycosylation is present at Thr-1161.

Homodimer; disulfide-linked. Post-translationally, N-glycosylated. O-glycosylated; contains glycosaminoglycan chondroitin sulfate and keratan sulfate. O-glycosylated with sialylated oligosaccharides which are predominantly represented by the monosialylated core type I structure, NeuNAcalpha2-3Galbeta1-3GalNAc, with smaller amounts of disialylated O-glycans. In terms of processing, the disulfide bond between Cys-1146 and Cys-1403 is essential for protein cleavage. Post-translationally, proteolytically cleaved by cathepsin CTSG. As to expression, highly expressed in synovial tissue, cartilage and liver and weakly in heart and lung. Isoform B is expressed in kidney, lung, liver, heart and brain. Isoform C and isoform D are widely expressed.

The protein localises to the secreted. In terms of biological role, plays a role in boundary lubrication within articulating joints. Prevents protein deposition onto cartilage from synovial fluid by controlling adhesion-dependent synovial growth and inhibiting the adhesion of synovial cells to the cartilage surface. Isoform F plays a role as a growth factor acting on the primitive cells of both hematopoietic and endothelial cell lineages. The chain is Proteoglycan 4 (PRG4) from Homo sapiens (Human).